Consider the following 90-residue polypeptide: U7-theraphotoxin-Hhn1j (90 aa).

An N-terminal signal peptide occupies residues 1–19; it reads MKTAIFTVVLALAVFAVLS. A propeptide spanning residues 20 to 50 is cleaved from the precursor; that stretch reads FGWEANEKALSEEFTELIHEKEAASETEARE. 3 disulfide bridges follow: Cys51–Cys65, Cys58–Cys70, and Cys64–Cys81.

Belongs to the neurotoxin 10 (Hwtx-1) family. 13 (Hntx-13) subfamily. In terms of tissue distribution, expressed by the venom gland.

It is found in the secreted. In terms of biological role, ion channel inhibitor. This Cyriopagopus hainanus (Chinese bird spider) protein is U7-theraphotoxin-Hhn1j.